The sequence spans 156 residues: Arginine repressor (156 aa).

The protein belongs to the ArgR family.

The protein localises to the cytoplasm. Its pathway is amino-acid biosynthesis; L-arginine biosynthesis [regulation]. Its function is as follows. Regulates arginine biosynthesis genes. The chain is Arginine repressor from Shewanella woodyi (strain ATCC 51908 / MS32).